The following is a 234-amino-acid chain: Segregation and condensation protein A (234 aa).

Belongs to the ScpA family. In terms of assembly, component of a cohesin-like complex composed of ScpA, ScpB and the Smc homodimer, in which ScpA and ScpB bind to the head domain of Smc. The presence of the three proteins is required for the association of the complex with DNA.

It is found in the cytoplasm. In terms of biological role, participates in chromosomal partition during cell division. May act via the formation of a condensin-like complex containing Smc and ScpB that pull DNA away from mid-cell into both cell halves. In Streptococcus pyogenes serotype M12 (strain MGAS2096), this protein is Segregation and condensation protein A.